The primary structure comprises 280 residues: Orotidine 5'-phosphate decarboxylase (280 aa).

Residues D40, 62-64 (KTH), 93-102 (DRKFVDIGNT), Y228, and R246 contribute to the substrate site. The active-site Proton donor is the K95.

The protein belongs to the OMP decarboxylase family.

It carries out the reaction orotidine 5'-phosphate + H(+) = UMP + CO2. It participates in pyrimidine metabolism; UMP biosynthesis via de novo pathway; UMP from orotate: step 2/2. The sequence is that of Orotidine 5'-phosphate decarboxylase (PYRG) from Solorina crocea.